An 892-amino-acid polypeptide reads, in one-letter code: DNA mismatch repair protein MutS (892 aa).

607–614 is an ATP binding site; the sequence is GPNMSGKS. Positions 833–855 are disordered; sequence EESQLSFFGAEQSSKKQDKPALD. Positions 845 to 855 are enriched in basic and acidic residues; that stretch reads SSKKQDKPALD.

It belongs to the DNA mismatch repair MutS family.

This protein is involved in the repair of mismatches in DNA. It is possible that it carries out the mismatch recognition step. This protein has a weak ATPase activity. The chain is DNA mismatch repair protein MutS from Bacillus anthracis (strain A0248).